Consider the following 758-residue polypeptide: Catalase-peroxidase (758 aa).

A compositionally biased stretch (polar residues) spans M1 to A10. The interval M1–W59 is disordered. The tryptophyl-tyrosyl-methioninium (Trp-Tyr) (with M-276) cross-link spans W128–Y250. Catalysis depends on H129, which acts as the Proton acceptor. The segment at residues Y250 to M276 is a cross-link (tryptophyl-tyrosyl-methioninium (Tyr-Met) (with W-128)). H291 serves as a coordination point for heme b.

The protein belongs to the peroxidase family. Peroxidase/catalase subfamily. As to quaternary structure, homodimer or homotetramer. Requires heme b as cofactor. Post-translationally, formation of the three residue Trp-Tyr-Met cross-link is important for the catalase, but not the peroxidase activity of the enzyme.

It catalyses the reaction H2O2 + AH2 = A + 2 H2O. The catalysed reaction is 2 H2O2 = O2 + 2 H2O. In terms of biological role, bifunctional enzyme with both catalase and broad-spectrum peroxidase activity. The sequence is that of Catalase-peroxidase from Salinispora arenicola (strain CNS-205).